The primary structure comprises 378 residues: Cysteine synthase (378 aa).

Residues 10–31 (NSEGDSNQQQNNNNNSNNNLKE) form a disordered region. Residues 15-28 (SNQQQNNNNNSNNN) are compositionally biased toward low complexity. Residue lysine 79 is modified to N6-(pyridoxal phosphate)lysine. Pyridoxal 5'-phosphate is bound by residues 215-219 (GTGGT) and serine 319.

This sequence belongs to the cysteine synthase/cystathionine beta-synthase family. Pyridoxal 5'-phosphate is required as a cofactor.

The enzyme catalyses O-acetyl-L-serine + hydrogen sulfide = L-cysteine + acetate. It functions in the pathway amino-acid biosynthesis; L-cysteine biosynthesis; L-cysteine from L-serine: step 2/2. In Dictyostelium discoideum (Social amoeba), this protein is Cysteine synthase (cysK).